Consider the following 159-residue polypeptide: MNRLSIIFPNLVMANATLPPNLAKIVERFQRHTDPKKRYEQLLWYGKKLEPMMEEGKIAANKVQGCVSQVYITADLEDGKVMYQGDSDAQLVKGLVALLIQGLNGLTPTEIVELTPDFIEATGLQVSLTPSRANGFYNIFKMMQTKAIAFQLGQSYGEG.

This sequence belongs to the SufE family.

This is an uncharacterized protein from Synechocystis sp. (strain ATCC 27184 / PCC 6803 / Kazusa).